The sequence spans 134 residues: Small ribosomal subunit protein uS9c (134 aa).

The tract at residues 105-134 is disordered; it reads QGYLTRNPLRKERKKYGLKKARKAPQFSKR. Basic residues predominate over residues 115–134; that stretch reads KERKKYGLKKARKAPQFSKR.

It belongs to the universal ribosomal protein uS9 family.

Its subcellular location is the plastid. It is found in the chloroplast. The chain is Small ribosomal subunit protein uS9c (rps9) from Nephroselmis olivacea (Green alga).